The following is a 753-amino-acid chain: 5-methyltetrahydropteroyltriglutamate--homocysteine methyltransferase (753 aa).

5-methyltetrahydropteroyltri-L-glutamate contacts are provided by residues 17-20 and Lys-117; that span reads RELK. L-homocysteine is bound by residues 431–433 and Glu-484; that span reads IGS. Residues 431–433 and Glu-484 each bind L-methionine; that span reads IGS. Residues 515-516 and Trp-561 each bind 5-methyltetrahydropteroyltri-L-glutamate; that span reads RC. Asp-599 provides a ligand contact to L-homocysteine. Asp-599 is a binding site for L-methionine. 5-methyltetrahydropteroyltri-L-glutamate is bound at residue Glu-605. The Zn(2+) site is built by His-641, Cys-643, and Glu-665. His-694 acts as the Proton donor in catalysis. Cys-726 serves as a coordination point for Zn(2+).

Belongs to the vitamin-B12 independent methionine synthase family. Zn(2+) is required as a cofactor.

The catalysed reaction is 5-methyltetrahydropteroyltri-L-glutamate + L-homocysteine = tetrahydropteroyltri-L-glutamate + L-methionine. It participates in amino-acid biosynthesis; L-methionine biosynthesis via de novo pathway; L-methionine from L-homocysteine (MetE route): step 1/1. Its function is as follows. Catalyzes the transfer of a methyl group from 5-methyltetrahydrofolate to homocysteine resulting in methionine formation. In Shigella flexneri, this protein is 5-methyltetrahydropteroyltriglutamate--homocysteine methyltransferase.